Here is a 340-residue protein sequence, read N- to C-terminus: Glycerol-3-phosphate dehydrogenase [NAD(P)+] (340 aa).

The NADPH site is built by Ser11, Trp12, Arg33, and Lys106. 3 residues coordinate sn-glycerol 3-phosphate: Lys106, Gly137, and Ser139. An NADPH-binding site is contributed by Ala141. Sn-glycerol 3-phosphate-binding residues include Lys192, Asp245, Ser255, Arg256, and Asn257. Catalysis depends on Lys192, which acts as the Proton acceptor. Arg256 contributes to the NADPH binding site. Residues Val280 and Glu282 each contribute to the NADPH site.

This sequence belongs to the NAD-dependent glycerol-3-phosphate dehydrogenase family.

It localises to the cytoplasm. It catalyses the reaction sn-glycerol 3-phosphate + NAD(+) = dihydroxyacetone phosphate + NADH + H(+). The catalysed reaction is sn-glycerol 3-phosphate + NADP(+) = dihydroxyacetone phosphate + NADPH + H(+). Its pathway is membrane lipid metabolism; glycerophospholipid metabolism. Its function is as follows. Catalyzes the reduction of the glycolytic intermediate dihydroxyacetone phosphate (DHAP) to sn-glycerol 3-phosphate (G3P), the key precursor for phospholipid synthesis. The chain is Glycerol-3-phosphate dehydrogenase [NAD(P)+] from Bacillus cereus (strain 03BB102).